The following is a 413-amino-acid chain: Cell division protein FtsZ 2 (413 aa).

Residues 132–134 (GTG), E171, R175, and D218 each bind GTP.

The protein belongs to the FtsZ family. In terms of assembly, homodimer. Polymerizes to form a dynamic ring structure in a strictly GTP-dependent manner. Interacts directly with several other division proteins.

It localises to the cytoplasm. Essential cell division protein that forms a contractile ring structure (Z ring) at the future cell division site. The regulation of the ring assembly controls the timing and the location of cell division. One of the functions of the FtsZ ring is to recruit other cell division proteins to the septum to produce a new cell wall between the dividing cells. Binds GTP and shows GTPase activity. In Thermococcus kodakarensis (strain ATCC BAA-918 / JCM 12380 / KOD1) (Pyrococcus kodakaraensis (strain KOD1)), this protein is Cell division protein FtsZ 2.